A 92-amino-acid polypeptide reads, in one-letter code: YcgL domain-containing protein ASA_2166 (92 aa).

Positions 1–85 (MLCAVYKSRK…PPENLLEQHK (85 aa)) constitute a YcgL domain.

The sequence is that of YcgL domain-containing protein ASA_2166 from Aeromonas salmonicida (strain A449).